Reading from the N-terminus, the 289-residue chain is Glucanase inhibitor protein 2 (289 aa).

A signal peptide spans 1 to 19; it reads MKVTATIAAASMAIAAASA. The region spanning 29 to 257 is the Peptidase S1 domain; the sequence is ILGGSIIPSG…ALKWVNPIIK (229 aa). Cysteine 56 and cysteine 72 are oxidised to a cystine. 3 N-linked (GlcNAc...) asparagine glycosylation sites follow: asparagine 89, asparagine 104, and asparagine 109. Intrachain disulfides connect cysteine 180–cysteine 192 and cysteine 202–cysteine 233.

The protein belongs to the peptidase S1 family.

It localises to the secreted. In terms of biological role, secreted effector that suppresses host plant glucan elicitor-mediated defense responses. Targets host endoglucanases and inhibits the endoglucanase-mediated release of elicitor-active glucan oligosaccharides from P.sojae cell walls. This chain is Glucanase inhibitor protein 2, found in Phytophthora sojae (Soybean stem and root rot agent).